A 189-amino-acid chain; its full sequence is Peptidyl-tRNA hydrolase (189 aa).

A tRNA-binding site is contributed by tyrosine 15. Residue histidine 20 is the Proton acceptor of the active site. TRNA contacts are provided by phenylalanine 66, asparagine 68, and asparagine 114.

It belongs to the PTH family. As to quaternary structure, monomer.

The protein localises to the cytoplasm. The catalysed reaction is an N-acyl-L-alpha-aminoacyl-tRNA + H2O = an N-acyl-L-amino acid + a tRNA + H(+). Functionally, hydrolyzes ribosome-free peptidyl-tRNAs (with 1 or more amino acids incorporated), which drop off the ribosome during protein synthesis, or as a result of ribosome stalling. In terms of biological role, catalyzes the release of premature peptidyl moieties from peptidyl-tRNA molecules trapped in stalled 50S ribosomal subunits, and thus maintains levels of free tRNAs and 50S ribosomes. The chain is Peptidyl-tRNA hydrolase from Dichelobacter nodosus (strain VCS1703A).